Consider the following 558-residue polypeptide: Formate--tetrahydrofolate ligase (558 aa).

Residue 66–73 (TPAGEGKT) coordinates ATP.

The protein belongs to the formate--tetrahydrofolate ligase family.

The catalysed reaction is (6S)-5,6,7,8-tetrahydrofolate + formate + ATP = (6R)-10-formyltetrahydrofolate + ADP + phosphate. It participates in one-carbon metabolism; tetrahydrofolate interconversion. The protein is Formate--tetrahydrofolate ligase of Neisseria gonorrhoeae (strain ATCC 700825 / FA 1090).